The sequence spans 339 residues: Phenylalanine--tRNA ligase alpha subunit (339 aa).

Residue E254 participates in Mg(2+) binding.

Belongs to the class-II aminoacyl-tRNA synthetase family. Phe-tRNA synthetase alpha subunit type 1 subfamily. Tetramer of two alpha and two beta subunits. The cofactor is Mg(2+).

The protein resides in the cytoplasm. It catalyses the reaction tRNA(Phe) + L-phenylalanine + ATP = L-phenylalanyl-tRNA(Phe) + AMP + diphosphate + H(+). In Dictyoglomus turgidum (strain DSM 6724 / Z-1310), this protein is Phenylalanine--tRNA ligase alpha subunit.